Reading from the N-terminus, the 191-residue chain is IMP cyclohydrolase (191 aa).

This sequence belongs to the archaeal IMP cyclohydrolase family.

The catalysed reaction is IMP + H2O = 5-formamido-1-(5-phospho-D-ribosyl)imidazole-4-carboxamide. It participates in purine metabolism; IMP biosynthesis via de novo pathway; IMP from 5-formamido-1-(5-phospho-D-ribosyl)imidazole-4-carboxamide: step 1/1. Functionally, catalyzes the cyclization of 5-formylamidoimidazole-4-carboxamide ribonucleotide to IMP. This Natronomonas pharaonis (strain ATCC 35678 / DSM 2160 / CIP 103997 / JCM 8858 / NBRC 14720 / NCIMB 2260 / Gabara) (Halobacterium pharaonis) protein is IMP cyclohydrolase.